The primary structure comprises 967 residues: MAFANFRRILRLSTFEKRKSREYEHVRRDLDPNDVWEILGELGDGAFGKVYKAKNKETGALAAAKVIETKSEEELEDYIVEIEILATCDHPYIVKLLGAYYYDGKLWIMIEFCPGGAVDAIMLELDRGLTEPQIQVVCRQMLEALNFLHGKRIIHRDLKAGNVLMTLEGDIRLADFGVSAKNLKTLQKRDSFIGTPYWMAPEVVLCETMKDAPYDYKADIWSLGITLIEMAQIEPPHHELNPMRVLLKIAKSDPPTLLTPSKWSTEFRDFLKIALDKNPETRPSAAQLLQHPFVSTVTSNKALRELVAEAKAEVMEEIEDGKEDGSEKDAVSAVPPPVNHTQDSSANGTQPSLNSDKLLQDSSTPLPPSQPQEPVNGPCNQPSGDGSPQNTSPADEVSKNDNGLKVPVPLRKSRPLSVDARIQVTEEKQITDQAENPSSAASKPPKVNQSRPNSSALETLGVETLANGGLELPGSVTPNHSKRASDCSNLSTSESMDYGTSLSADLSLNKETGSLSLKGSKLHNKTLKRTRRFVVDGVEVSITTSKIISEDEKKDEEMRFLRRQELRELRLLQKEEHRNQTQLSTKHELQLEQMHRRFEQEINAKKKFYDVELENLERQQKQQVEKMEQDHSVRRREEAKRIRLEQDRDYARFQEQLKQMKKEVKRSIEKALRKQRQESMRMGQDSHTQKKQRLDRDFVAKQKEDLELAMKKLTAENRREICDKERDCLNKKQELLRDREAALWEMEEHQLQERHQLVKQQLKDQYFLQRHDLLRKHEKEREQMQRYNQRMMEQLKVRQQQEKARLPKIQRSDGKTRMAMYKKSLHINGAGSASEQREKVKQFSQQEEKRQKAERLQQQQKHENQMRDMVAQCESNMNELQQLQNEKCHLLVEHETQKLKALDESHNQSLKEWRDKLRPRKKALEEDLNQKKREQEMFFRLSEEAETRPTTPNRASKFFPYSSGDAS.

Residues Ser-13 and Ser-20 each carry the phosphoserine modification. Residues 36–294 enclose the Protein kinase domain; the sequence is WEILGELGDG…AAQLLQHPFV (259 aa). Residues 42–50 and Lys-65 each bind ATP; that span reads LGDGAFGKV. Asp-157 acts as the Proton acceptor in catalysis. An activation segment region spans residues 175–224; the sequence is DFGVSAKNLKTLQKRDSFIGTPYWMAPEVVLCETMKDAPYDYKADIWSLG. Phosphothreonine; by autocatalysis is present on Thr-185. Ser-191 is subject to Phosphoserine; by autocatalysis. Disordered stretches follow at residues 317 to 454 and 468 to 498; these read EIED…RPNS and GGLE…SMDY. Polar residues-rich tracts occupy residues 339–364, 378–393, and 431–454; these read NHTQ…DSST, PCNQ…NTSP, and TDQA…RPNS. Ser-438, Ser-450, Ser-454, and Ser-485 each carry phosphoserine. A compositionally biased stretch (polar residues) spans 486 to 498; the sequence is DCSNLSTSESMDY. Ser-514 and Ser-549 each carry phosphoserine. Disordered regions lie at residues 827 to 866 and 902 to 967; these read INGA…ENQM and LDES…GDAS. Composition is skewed to basic and acidic residues over residues 835-866 and 902-947; these read EQRE…ENQM and LDES…EAET. The residue at position 951 (Thr-951) is a Phosphothreonine.

This sequence belongs to the protein kinase superfamily. STE Ser/Thr protein kinase family. STE20 subfamily. Homodimer; homodimerization is required for activation segment autophosphorylation. In terms of processing, autophosphorylates following homodimerization, leading to activation of the protein.

Its subcellular location is the cell membrane. The catalysed reaction is L-seryl-[protein] + ATP = O-phospho-L-seryl-[protein] + ADP + H(+). The enzyme catalyses L-threonyl-[protein] + ATP = O-phospho-L-threonyl-[protein] + ADP + H(+). Its activity is regulated as follows. Inhibited by the pyrrole-indolinone inhibitor SU11274 (K00593): intercalates between the ATP-binding Lys-65 and alpha-C glutamate (Glu-81), resulting in a partial disordering of the lysine side chain. Also specifically inhibited by erlotinib. Slightly inhibited by gefitinib. Functionally, serine/threonine-protein kinase involved in regulation of lymphocyte migration. Phosphorylates MSN, and possibly PLK1. Involved in regulation of lymphocyte migration by mediating phosphorylation of ERM proteins such as MSN. Acts as a negative regulator of MAP3K1/MEKK1. May also act as a cell cycle regulator by acting as a polo kinase kinase: mediates phosphorylation of PLK1 in vitro; however such data require additional evidences in vivo. The chain is Serine/threonine-protein kinase 10 (Stk10) from Rattus norvegicus (Rat).